Reading from the N-terminus, the 441-residue chain is Hydroxycinnamoyl-CoA:5-hydroxyanthranilate N-hydroxycinnamoyltransferase HHT1 (441 aa).

Catalysis depends on proton acceptor residues histidine 158 and aspartate 388.

Belongs to the plant acyltransferase family.

The catalysed reaction is 5-hydroxyanthranilate + (E)-4-coumaroyl-CoA = avenanthramide A + CoA. It catalyses the reaction 5-hydroxyanthranilate + (E)-caffeoyl-CoA = avenanthramide C + CoA. Its function is as follows. Involved in the biosynthesis of avenanthramide phytoalexins, which are phenolic alkaloids found mainly in oats. Catalyzes the N-acylation of 5-hydroxyanthranilate with 4-coumaroyl-CoA or caffeoyl-CoA as acyl donors, forming avenanthramide A and avenanthramide C, respectively. Does not accept feruloyl-CoA as a substrate. The chain is Hydroxycinnamoyl-CoA:5-hydroxyanthranilate N-hydroxycinnamoyltransferase HHT1 from Avena sativa (Oat).